Consider the following 119-residue polypeptide: Iron-sulfur cluster insertion protein ErpA (119 aa).

Residues cysteine 47, cysteine 111, and cysteine 113 each contribute to the iron-sulfur cluster site.

Belongs to the HesB/IscA family. Homodimer. Iron-sulfur cluster is required as a cofactor.

Functionally, required for insertion of 4Fe-4S clusters for at least IspG. The sequence is that of Iron-sulfur cluster insertion protein ErpA from Blochmanniella floridana.